The chain runs to 396 residues: Ribosomal RNA large subunit methyltransferase I (396 aa).

The PUA domain occupies 2–79 (AVRIKLKPGR…REEEIDREFF (78 aa)).

This sequence belongs to the methyltransferase superfamily. RlmI family.

It is found in the cytoplasm. The enzyme catalyses cytidine(1962) in 23S rRNA + S-adenosyl-L-methionine = 5-methylcytidine(1962) in 23S rRNA + S-adenosyl-L-homocysteine + H(+). Specifically methylates the cytosine at position 1962 (m5C1962) of 23S rRNA. This is Ribosomal RNA large subunit methyltransferase I from Shewanella sp. (strain MR-7).